The primary structure comprises 1028 residues: Carbamoyl phosphate synthase large chain (1028 aa).

The tract at residues 1–409 is carboxyphosphate synthetic domain; it reads MPPRRDLKKI…ALMKALRGLE (409 aa). Residues arginine 129, arginine 169, glycine 175, glycine 176, glutamate 208, valine 210, glutamate 215, glycine 241, valine 242, histidine 243, glutamine 285, and glutamate 299 each contribute to the ATP site. The 196-residue stretch at 133–328 folds into the ATP-grasp 1 domain; the sequence is QEAMRRIDLE…IAKIAALLAV (196 aa). Residues glutamine 285, glutamate 299, and asparagine 301 each contribute to the Mg(2+) site. Mn(2+)-binding residues include glutamine 285, glutamate 299, and asparagine 301. Residues 410 to 549 are oligomerization domain; the sequence is RDVRALAGVR…YSTYELEDEV (140 aa). The tract at residues 550–933 is carbamoyl phosphate synthetic domain; that stretch reads WPSQKPKVVI…AYYKAELGAG (384 aa). The ATP-grasp 2 domain maps to 674–866; it reads HALCQRLGIP…LAKLAALIAV (193 aa). Positions 710, 750, 752, 757, 782, 783, 784, 785, 825, and 837 each coordinate ATP. Residues glutamine 825, glutamate 837, and asparagine 839 each contribute to the Mg(2+) site. Residues glutamine 825, glutamate 837, and asparagine 839 each contribute to the Mn(2+) site. The 95-residue stretch at 934 to 1028 folds into the MGS-like domain; sequence QRLPLSGQVR…QDWHQKAPRG (95 aa). The segment at 934-1028 is allosteric domain; sequence QRLPLSGQVR…QDWHQKAPRG (95 aa).

It belongs to the CarB family. Composed of two chains; the small (or glutamine) chain promotes the hydrolysis of glutamine to ammonia, which is used by the large (or ammonia) chain to synthesize carbamoyl phosphate. Tetramer of heterodimers (alpha,beta)4. It depends on Mg(2+) as a cofactor. Requires Mn(2+) as cofactor.

The catalysed reaction is hydrogencarbonate + L-glutamine + 2 ATP + H2O = carbamoyl phosphate + L-glutamate + 2 ADP + phosphate + 2 H(+). It carries out the reaction hydrogencarbonate + NH4(+) + 2 ATP = carbamoyl phosphate + 2 ADP + phosphate + 2 H(+). The protein operates within amino-acid biosynthesis; L-arginine biosynthesis; carbamoyl phosphate from bicarbonate: step 1/1. Its pathway is pyrimidine metabolism; UMP biosynthesis via de novo pathway; (S)-dihydroorotate from bicarbonate: step 1/3. In terms of biological role, large subunit of the glutamine-dependent carbamoyl phosphate synthetase (CPSase). CPSase catalyzes the formation of carbamoyl phosphate from the ammonia moiety of glutamine, carbonate, and phosphate donated by ATP, constituting the first step of 2 biosynthetic pathways, one leading to arginine and/or urea and the other to pyrimidine nucleotides. The large subunit (synthetase) binds the substrates ammonia (free or transferred from glutamine from the small subunit), hydrogencarbonate and ATP and carries out an ATP-coupled ligase reaction, activating hydrogencarbonate by forming carboxy phosphate which reacts with ammonia to form carbamoyl phosphate. The chain is Carbamoyl phosphate synthase large chain from Thermus thermophilus (strain ATCC BAA-163 / DSM 7039 / HB27).